The chain runs to 107 residues: Colipase (107 aa).

An N-terminal signal peptide occupies residues 1 to 17; it reads MEKVLVLLLVALSVAYA. A propeptide spans 18–22 (enterostatin, activation peptide); that stretch reads APGPR. 5 disulfide bridges follow: Cys-34/Cys-45, Cys-40/Cys-56, Cys-44/Cys-78, Cys-66/Cys-86, and Cys-80/Cys-104.

Belongs to the colipase family. As to quaternary structure, forms a 1:1 stoichiometric complex with pancreatic lipase. In terms of tissue distribution, expressed by the pancreas.

Its subcellular location is the secreted. Colipase is a cofactor of pancreatic lipase. It allows the lipase to anchor itself to the lipid-water interface. Without colipase the enzyme is washed off by bile salts, which have an inhibitory effect on the lipase. Functionally, enterostatin has a biological activity as a satiety signal. The sequence is that of Colipase (CLPS) from Oryctolagus cuniculus (Rabbit).